Reading from the N-terminus, the 267-residue chain is Hydroxyethylthiazole kinase 2 (267 aa).

Position 41 (methionine 41) interacts with substrate. ATP contacts are provided by lysine 116 and threonine 166. Residue glycine 193 coordinates substrate.

It belongs to the Thz kinase family. Requires Mg(2+) as cofactor.

It carries out the reaction 5-(2-hydroxyethyl)-4-methylthiazole + ATP = 4-methyl-5-(2-phosphooxyethyl)-thiazole + ADP + H(+). Its pathway is cofactor biosynthesis; thiamine diphosphate biosynthesis; 4-methyl-5-(2-phosphoethyl)-thiazole from 5-(2-hydroxyethyl)-4-methylthiazole: step 1/1. In terms of biological role, catalyzes the phosphorylation of the hydroxyl group of 4-methyl-5-beta-hydroxyethylthiazole (THZ). In Streptococcus pneumoniae (strain P1031), this protein is Hydroxyethylthiazole kinase 2.